Consider the following 1411-residue polypeptide: Early endosome antigen 1 (1411 aa).

The segment at 1-27 (MFRRILQRTPGRVGSQGSDLDSSATPI) is disordered. Residues 15-27 (SQGSDLDSSATPI) show a composition bias toward polar residues. Residues 41-64 (FICPQCMKSLGSADELFKHYQAVH) form a C2H2-type zinc finger. 2 positions are modified to phosphoserine: Ser52 and Ser70. The stretch at 78–1348 (LALTRDDITL…IKHTQALNRK (1271 aa)) forms a coiled coil. Disordered stretches follow at residues 476 to 501 (STELQHQLEKSKQQHQEQQALQQSAT) and 1189 to 1217 (EKESQQLMREQVKKEEEKRKEEFSEKEAK). The segment covering 481-490 (HQLEKSKQQH) has biased composition (basic and acidic residues). Low complexity predominate over residues 491–500 (QEQQALQQSA). The FYVE-type zinc finger occupies 1352–1410 (DNEVQNCMSCGKCFSVTVRRHHCRQCGNIFCAECSTKNALTPSSKKPVRVCDACFNDLQ). Zn(2+) contacts are provided by Cys1358, Cys1361, Cys1374, Cys1377, Cys1382, Cys1385, Cys1402, and Cys1405.

Homodimer. Binds STX6. Binds RAB5A, RAB5B, RAB5C and RAB22A that have been activated by GTP-binding. Interacts with ERBB2. Interacts with RAB31. Interacts with SAMD9 and SAMD9L. May interact with PLEKHF2.

It is found in the cytoplasm. The protein resides in the early endosome membrane. Binds phospholipid vesicles containing phosphatidylinositol 3-phosphate and participates in endosomal trafficking. The sequence is that of Early endosome antigen 1 (Eea1) from Mus musculus (Mouse).